The sequence spans 242 residues: HTH domain-truncated transcriptional regulator QseD (242 aa).

It belongs to the LysR transcriptional regulatory family.

Functionally, represses EHEC virulence expression. Down-regulates expression of LEE (locus of enterocyte effacement) and iraD genes, and alters AE (attaching and effacing) lesion formation. May regulate transcription through interactions with another HTH DNA-binding protein. This Escherichia coli O157:H7 protein is HTH domain-truncated transcriptional regulator QseD (qseD).